The following is a 602-amino-acid chain: Probable HECT-type ubiquitin ligase-interacting protein creD (602 aa).

2 disordered regions span residues 375-398 (EVDP…GALS) and 457-499 (TADY…MATP). The segment covering 463-475 (PSSGSNSHSPASP) has biased composition (low complexity). A compositionally biased stretch (basic and acidic residues) spans 477–492 (LSRRPSDEGYRDHDHI).

The protein belongs to the arrestin family. Interacts with hulA.

Its function is as follows. Component of the regulatory network controlling carbon source utilization through ubiquitination and deubiquitination involving creA, creB, creC, creD and acrB. May be involved in signaling by recognizing appropriately phosphorylated substrates via its arrestin domains and then recruit a HECT-type ubiquitin ligase such as hulA, leading to ubiquitination of the substrate, providing a link between ubiquitination and phosphorylation in protein regulation and stability. This Aspergillus clavatus (strain ATCC 1007 / CBS 513.65 / DSM 816 / NCTC 3887 / NRRL 1 / QM 1276 / 107) protein is Probable HECT-type ubiquitin ligase-interacting protein creD (creD).